Reading from the N-terminus, the 1372-residue chain is Paired amphipathic helix protein Sin3-like 1 (1372 aa).

The disordered stretch occupies residues 1–50 (MKRIRDDVYASGSQFRRPLGSSRGQLCGQSPVHGSGDTEEEEEGGSRRVS). PAH domains lie at 51–121 (QKLT…LPKG) and 136–206 (KTVE…LPAS). Low complexity predominate over residues 210–222 (HSAAQHSRSQAQQ). Disordered stretches follow at residues 210 to 244 (HSAAQHSRSQAQQYSDRGSDPPLLHQMQVEKERRR) and 272 to 323 (REQR…SGSA). A compositionally biased stretch (basic and acidic residues) spans 272 to 315 (REQRKRLDKENRARRGRDLDDREAGQDNLHHFPEKRKSSRRAEA). The PAH 3 domain occupies 331–400 (LKSMYKQAFV…DEFNQFFERC (70 aa)). Disordered regions lie at residues 764–783 (DVNHSTSPNGEAAVSSGGDT), 791–817 (LKSAANGDENSSSGTFKHGIGLLNKDS), and 934–1056 (GLRS…AEGM). A compositionally biased stretch (basic and acidic residues) spans 938 to 957 (DSSKGTRNSDDPEGPSRNEK). 2 stretches are compositionally biased toward acidic residues: residues 990-1013 (AEAEVEADAEVENEDDADDVDSEN) and 1028-1042 (SQDEDREEENGEHDE). Position 1049 is a phosphoserine (serine 1049).

Interacts (via PAH3) with ALY2. Interacts (via PAH2) with TBP1. Interacts with ALY3, GATA21, TRP2, TKI1, VAL1, SKP1B, FBX5 and PUB14.

Its subcellular location is the nucleus. Acts as a transcriptional repressor. A histone deacetylase (HDAC) activity is required for transcription repression. May play a role in telomere stability. This chain is Paired amphipathic helix protein Sin3-like 1 (SNL1), found in Arabidopsis thaliana (Mouse-ear cress).